A 696-amino-acid chain; its full sequence is MKFAEHLSAHITPEWRKQYIQYEAFKDMLYSAQDQAPSVEVTDEDTVKRYFAKFEEKFFQTCEKELAKINTFYSEKLAEAQRRFATLQNELQSSLDVQKESSGVTTLRQRRKPVFHLSHEERVQHRNIKDLKLAFSEFYLSLILLQNYQNLNFTGFRKILKKHDKILETSRGADWRVIHVEVAPFYTCKKINQLISETEAVVTNELEDGDRQKAMKRLRVPPLGAAQPAPAWTTFRVGLFCGIFIVLNITLVFAAVFKLETDRTVWPLIRIYRGGFLLIEFLFLLGINTYGWRQAGVNHVLIFELNPRNNLSHQHLFEIAGFLGILWCLSLLACFFAPISIIPIYVYPLALYGFMVFFLINPTKTFYYKSRFWLLKLLFRVFTAPFHKVGFADFWLADQLNSLSVILMDLEYMICFYSFELKWDESKGLLPNDPQGPEFCHKYTYGVRAIVQCIPAWLRFIQCLRRYRDTRRAFPHLVNAGKYSTTFFTVTFAALYSTHKEQNHPDYKVFFYLWVFFCIISSCYTLIWDLKMDWGLFDKNAGENTFLREEIVYPQKAYYYCAIIEDVILRFAWTIQISITVTTFKPHVGDIIATVFAPLEVFRRFVWNFFRLENEHLNNCGEFRAVRDISVAPLNADDQTLLEQMMDQEDGVRNRQKNRSWKYNQSISLRRPRLASQSKARDTKVLIEDTDDEANT.

Over 1–228 the chain is Cytoplasmic; that stretch reads MKFAEHLSAH…RVPPLGAAQP (228 aa). One can recognise an SPX domain in the interval 2–224; that stretch reads KFAEHLSAHI…MKRLRVPPLG (223 aa). The interval 158 to 165 is important for inositol polyphosphate binding; sequence KILKKHDK. A helical transmembrane segment spans residues 229-259; that stretch reads APAWTTFRVGLFCGIFIVLNITLVFAAVFKL. The Extracellular segment spans residues 260–264; that stretch reads ETDRT. The chain crosses the membrane as a helical span at residues 265–296; sequence VWPLIRIYRGGFLLIEFLFLLGINTYGWRQAG. Topologically, residues 297–309 are cytoplasmic; it reads VNHVLIFELNPRN. A helical transmembrane segment spans residues 310 to 337; the sequence is NLSHQHLFEIAGFLGILWCLSLLACFFA. Residues 338–343 lie on the Extracellular side of the membrane; the sequence is PISIIP. Residues 344–365 form a helical membrane-spanning segment; that stretch reads IYVYPLALYGFMVFFLINPTKT. The segment at residues 366–383 is an intramembrane region (helical); that stretch reads FYYKSRFWLLKLLFRVFT. Residues 384–388 lie on the Cytoplasmic side of the membrane; sequence APFHK. A discontinuously helical membrane pass occupies residues 389–422; that stretch reads VGFADFWLADQLNSLSVILMDLEYMICFYSFELK. The phosphate site is built by aspartate 398 and asparagine 401. Topologically, residues 423–429 are extracellular; the sequence is WDESKGL. A discontinuously helical transmembrane segment spans residues 430–471; that stretch reads LPNDPQGPEFCHKYTYGVRAIVQCIPAWLRFIQCLRRYRDTR. The 205-residue stretch at 439–643 folds into the EXS domain; that stretch reads FCHKYTYGVR…LNADDQTLLE (205 aa). A topological domain (cytoplasmic) is located at residue arginine 472. A helical transmembrane segment spans residues 473–503; it reads AFPHLVNAGKYSTTFFTVTFAALYSTHKEQN. Lysine 482 and tyrosine 483 together coordinate phosphate. Residues 504-506 are Extracellular-facing; the sequence is HPD. A helical transmembrane segment spans residues 507 to 534; it reads YKVFFYLWVFFCIISSCYTLIWDLKMDW. Topologically, residues 535-553 are cytoplasmic; that stretch reads GLFDKNAGENTFLREEIVY. A discontinuously helical transmembrane segment spans residues 554 to 585; that stretch reads PQKAYYYCAIIEDVILRFAWTIQISITVTTFK. Arginine 570 is a binding site for phosphate. The Extracellular portion of the chain corresponds to 586 to 587; the sequence is PH. Residues 588-626 form a helical membrane-spanning segment; it reads VGDIIATVFAPLEVFRRFVWNFFRLENEHLNNCGEFRAV. Arginine 603 and arginine 604 together coordinate phosphate. The Cytoplasmic segment spans residues 627–696; sequence RDISVAPLNA…IEDTDDEANT (70 aa). The residue at position 668 (serine 668) is a Phosphoserine. Residues 672–696 are disordered; the sequence is PRLASQSKARDTKVLIEDTDDEANT. Threonine 690 bears the Phosphothreonine mark.

It belongs to the SYG1 (TC 2.A.94) family. In terms of assembly, homodimer.

It is found in the cell membrane. The enzyme catalyses phosphate(in) = phosphate(out). Its function is as follows. Inorganic ion transporter that mediates phosphate ion export across plasma membrane. Plays a major role in phosphate homeostasis, preventing intracellular phosphate accumulation and possible calcium phosphate precipitation, ultimately preserving calcium signaling. Binds inositol hexakisphosphate (Ins6P) and similar inositol polyphosphates, such as 5-diphospho-inositol pentakisphosphate (5-InsP7), which are important intracellular signaling molecules involved in regulation of phosphate flux. The protein is Solute carrier family 53 member 1 (Xpr1) of Mus pahari (Gairdner's shrew-mouse).